A 294-amino-acid polypeptide reads, in one-letter code: 4-hydroxybenzoate octaprenyltransferase (294 aa).

Transmembrane regions (helical) follow at residues 37–57, 101–121, 142–162, 169–189, 219–239, 241–261, and 271–293; these read LWAM…WIFF, LAVA…LNAL, FFAI…PMAF, VPFV…AYDT, IMIC…LLGL, WPYY…YTLI, and AAFR…AYLL.

It belongs to the UbiA prenyltransferase family. Mg(2+) serves as cofactor.

Its subcellular location is the cell inner membrane. The catalysed reaction is all-trans-octaprenyl diphosphate + 4-hydroxybenzoate = 4-hydroxy-3-(all-trans-octaprenyl)benzoate + diphosphate. Its pathway is cofactor biosynthesis; ubiquinone biosynthesis. In terms of biological role, catalyzes the prenylation of para-hydroxybenzoate (PHB) with an all-trans polyprenyl group. Mediates the second step in the final reaction sequence of ubiquinone-8 (UQ-8) biosynthesis, which is the condensation of the polyisoprenoid side chain with PHB, generating the first membrane-bound Q intermediate 3-octaprenyl-4-hydroxybenzoate. The chain is 4-hydroxybenzoate octaprenyltransferase from Cupriavidus metallidurans (strain ATCC 43123 / DSM 2839 / NBRC 102507 / CH34) (Ralstonia metallidurans).